The chain runs to 606 residues: NADH-ubiquinone oxidoreductase chain 5 (606 aa).

The next 16 membrane-spanning stretches (helical) occupy residues 3 to 23, 35 to 55, 87 to 107, 117 to 137, 140 to 160, 171 to 191, 211 to 233, 241 to 261, 273 to 293, 301 to 320, 325 to 347, 366 to 386, 402 to 422, 457 to 477, 488 to 508, and 582 to 602; these read LFTSTLILSLSMLTIPVLMSL, YVKTIISYAFFTSLIPTLIFI, MIFTPVALFVTWSIMEFSMWY, FFKYLLMFLITMMILVTANNL, LFIGWEGVGIMSFLLIGWWYG, AILYNRIGDIGFILAMAWFLF, LPLLGLLLAATGKSAQFGLHPWL, TPVSALLHSSTMVVAGIFLLI, MQTLILCMGAITTLFTAICAL, IIAFSTSSQLGLMMVTIGIN, AFLHICTHAFFKAMLFMCSGSII, LPFTTTSLIVGSLALTGTPFL, SYTNAWALLMTLIATSLTAVY, LLIGSIFAGFIISLNITPMTI, LTALIITLTGFILALEISLMT, and GLIKLYFLSFLITLIITMLLF.

Belongs to the complex I subunit 5 family. As to quaternary structure, core subunit of respiratory chain NADH dehydrogenase (Complex I) which is composed of 45 different subunits.

The protein localises to the mitochondrion inner membrane. It catalyses the reaction a ubiquinone + NADH + 5 H(+)(in) = a ubiquinol + NAD(+) + 4 H(+)(out). Core subunit of the mitochondrial membrane respiratory chain NADH dehydrogenase (Complex I) which catalyzes electron transfer from NADH through the respiratory chain, using ubiquinone as an electron acceptor. Essential for the catalytic activity and assembly of complex I. The sequence is that of NADH-ubiquinone oxidoreductase chain 5 (MT-ND5) from Pseudosoriculus fumidus (Taiwanese brown-toothed shrew).